A 113-amino-acid polypeptide reads, in one-letter code: Urotensin-2B (113 aa).

An N-terminal signal peptide occupies residues 1 to 27; that stretch reads MKVFSTSLWCGLLTLLSVMNLFKSVRG. Positions 28 to 103 are excised as a propeptide; that stretch reads RPHLSSGHEL…LDNLSSSHTK (76 aa). Cysteine 107 and cysteine 112 are joined by a disulfide.

The protein belongs to the urotensin-2 family.

The protein localises to the secreted. Its function is as follows. Potent vasoconstrictor. This Mus musculus (Mouse) protein is Urotensin-2B (Uts2b).